Reading from the N-terminus, the 66-residue chain is Large ribosomal subunit protein bL35 (66 aa).

This sequence belongs to the bacterial ribosomal protein bL35 family.

The polypeptide is Large ribosomal subunit protein bL35 (Thermodesulfovibrio yellowstonii (strain ATCC 51303 / DSM 11347 / YP87)).